We begin with the raw amino-acid sequence, 464 residues long: Phosphoenolpyruvate carboxylase (464 aa).

The protein belongs to the PEPCase type 2 family. As to quaternary structure, homotetramer. It depends on Mg(2+) as a cofactor.

It carries out the reaction oxaloacetate + phosphate = phosphoenolpyruvate + hydrogencarbonate. Its function is as follows. Catalyzes the irreversible beta-carboxylation of phosphoenolpyruvate (PEP) to form oxaloacetate (OAA), a four-carbon dicarboxylic acid source for the tricarboxylic acid cycle. In Thermofilum pendens (strain DSM 2475 / Hrk 5), this protein is Phosphoenolpyruvate carboxylase.